Consider the following 279-residue polypeptide: Protein COP1 SUPPRESSOR 2 (279 aa).

2 disordered regions span residues 1–29 (MPPKRNFRKRSFEEEEEDNDVNKAAISEE) and 57–79 (SSTAQSSIGKVKPVEKTETEGEK). The segment covering 68-79 (KPVEKTETEGEK) has biased composition (basic and acidic residues). Residues 86-183 (DTFAQETAVL…EETEAAKKLL (98 aa)) are a coiled coil. Over residues 217–229 (LRREHPELYKDRG) the composition is skewed to basic and acidic residues. A disordered region spans residues 217–279 (LRREHPELYK…KRERNRVMRR (63 aa)). Residues 250 to 260 (ADSGKSRQAAT) show a composition bias toward polar residues. Over residues 270 to 279 (KRERNRVMRR) the composition is skewed to basic residues.

The protein belongs to the TLS1 family. Interacts with COP1.

The protein localises to the nucleus. Its subcellular location is the nucleus speckle. Inhibits E3 ubiquitin-protein ligase activity of COP1, a central repressor of seedling photomorphogenesis. Represses COP1-mediated turnover of HY5 in the dark. Required for primary root development under normal light growth conditions. This Arabidopsis thaliana (Mouse-ear cress) protein is Protein COP1 SUPPRESSOR 2.